We begin with the raw amino-acid sequence, 177 residues long: Large ribosomal subunit protein uL6 (177 aa).

Belongs to the universal ribosomal protein uL6 family. As to quaternary structure, part of the 50S ribosomal subunit.

Functionally, this protein binds to the 23S rRNA, and is important in its secondary structure. It is located near the subunit interface in the base of the L7/L12 stalk, and near the tRNA binding site of the peptidyltransferase center. The chain is Large ribosomal subunit protein uL6 from Rhodospirillum centenum (strain ATCC 51521 / SW).